A 343-amino-acid chain; its full sequence is Anthranilate phosphoribosyltransferase (343 aa).

5-phospho-alpha-D-ribose 1-diphosphate contacts are provided by residues glycine 86, 89 to 90 (GD), threonine 94, 96 to 99 (NIST), 114 to 122 (KHGNRSASG), and serine 126. Glycine 86 is an anthranilate binding site. Mg(2+) is bound at residue serine 98. Anthranilate is bound at residue asparagine 117. Arginine 172 contributes to the anthranilate binding site. Positions 231 and 232 each coordinate Mg(2+).

The protein belongs to the anthranilate phosphoribosyltransferase family. As to quaternary structure, homodimer. Mg(2+) serves as cofactor.

The enzyme catalyses N-(5-phospho-beta-D-ribosyl)anthranilate + diphosphate = 5-phospho-alpha-D-ribose 1-diphosphate + anthranilate. It functions in the pathway amino-acid biosynthesis; L-tryptophan biosynthesis; L-tryptophan from chorismate: step 2/5. Functionally, catalyzes the transfer of the phosphoribosyl group of 5-phosphorylribose-1-pyrophosphate (PRPP) to anthranilate to yield N-(5'-phosphoribosyl)-anthranilate (PRA). The protein is Anthranilate phosphoribosyltransferase of Synechococcus sp. (strain JA-2-3B'a(2-13)) (Cyanobacteria bacterium Yellowstone B-Prime).